The following is a 529-amino-acid chain: Peptide chain release factor 3 (529 aa).

One can recognise a tr-type G domain in the interval 11–280 (AKRRTFAIIS…GLVEWAPAPM (270 aa)). GTP-binding positions include 20–27 (SHPDAGKT), 88–92 (DTPGH), and 142–145 (NKLD).

Belongs to the TRAFAC class translation factor GTPase superfamily. Classic translation factor GTPase family. PrfC subfamily.

It localises to the cytoplasm. Functionally, increases the formation of ribosomal termination complexes and stimulates activities of RF-1 and RF-2. It binds guanine nucleotides and has strong preference for UGA stop codons. It may interact directly with the ribosome. The stimulation of RF-1 and RF-2 is significantly reduced by GTP and GDP, but not by GMP. The chain is Peptide chain release factor 3 from Shigella dysenteriae serotype 1 (strain Sd197).